Consider the following 860-residue polypeptide: GPI ethanolamine phosphate transferase 2 (860 aa).

2 N-linked (GlcNAc...) asparagine glycosylation sites follow: N123 and N180. Transmembrane regions (helical) follow at residues 408 to 428, 438 to 458, 459 to 479, 487 to 506, 524 to 544, 555 to 575, 576 to 596, and 639 to 659; these read LGGI…FSAL, LYLI…TVEE, EHQI…ISGS, FNWM…NQTG, NHPV…NKVW, LAFL…ITQA, WEAG…PGTL, and AFLT…LFMV. N672 carries N-linked (GlcNAc...) asparagine glycosylation. Helical transmembrane passes span 692 to 712, 736 to 756, 795 to 815, and 834 to 854; these read LVLV…FSMG, FVGV…STAG, VYVV…TCFF, and FVWT…IFVV.

The protein belongs to the PIGG/PIGN/PIGO family. PIGG subfamily.

The protein resides in the endoplasmic reticulum membrane. It participates in glycolipid biosynthesis; glycosylphosphatidylinositol-anchor biosynthesis. Ethanolamine phosphate transferase involved in glycosylphosphatidylinositol-anchor biosynthesis. Transfers ethanolamine phosphate to the GPI second mannose. This is GPI ethanolamine phosphate transferase 2 (LAS21) from Yarrowia lipolytica (strain CLIB 122 / E 150) (Yeast).